Here is a 254-residue protein sequence, read N- to C-terminus: 5'-nucleotidase SurE (254 aa).

The a divalent metal cation site is built by aspartate 8, aspartate 9, serine 39, and asparagine 97.

This sequence belongs to the SurE nucleotidase family. The cofactor is a divalent metal cation.

The protein resides in the cytoplasm. The catalysed reaction is a ribonucleoside 5'-phosphate + H2O = a ribonucleoside + phosphate. Its function is as follows. Nucleotidase that shows phosphatase activity on nucleoside 5'-monophosphates. The protein is 5'-nucleotidase SurE of Alkaliphilus metalliredigens (strain QYMF).